A 256-amino-acid polypeptide reads, in one-letter code: Thiazole synthase (256 aa).

Lys-95 acts as the Schiff-base intermediate with DXP in catalysis. Residues Gly-156, 182-183 (AG), and 204-205 (NT) contribute to the 1-deoxy-D-xylulose 5-phosphate site.

This sequence belongs to the ThiG family. In terms of assembly, homotetramer. Forms heterodimers with either ThiH or ThiS.

It is found in the cytoplasm. The enzyme catalyses [ThiS sulfur-carrier protein]-C-terminal-Gly-aminoethanethioate + 2-iminoacetate + 1-deoxy-D-xylulose 5-phosphate = [ThiS sulfur-carrier protein]-C-terminal Gly-Gly + 2-[(2R,5Z)-2-carboxy-4-methylthiazol-5(2H)-ylidene]ethyl phosphate + 2 H2O + H(+). Its pathway is cofactor biosynthesis; thiamine diphosphate biosynthesis. Catalyzes the rearrangement of 1-deoxy-D-xylulose 5-phosphate (DXP) to produce the thiazole phosphate moiety of thiamine. Sulfur is provided by the thiocarboxylate moiety of the carrier protein ThiS. In vitro, sulfur can be provided by H(2)S. In Vibrio cholerae serotype O1 (strain ATCC 39541 / Classical Ogawa 395 / O395), this protein is Thiazole synthase.